A 360-amino-acid polypeptide reads, in one-letter code: Phospho-N-acetylmuramoyl-pentapeptide-transferase (360 aa).

A run of 10 helical transmembrane segments spans residues 27–47 (GALI…INSL), 71–91 (TPTM…LLWA), 93–113 (LSSI…SIGF), 134–154 (LGLE…NGQA), 168–188 (FIIN…VGAG), 199–219 (GLAI…AYLS), 239–259 (LAVV…FNAP), 262–282 (AIFM…TVAV), 288–308 (IVLV…IIQV), and 337–357 (QVVI…LSTL).

It belongs to the glycosyltransferase 4 family. MraY subfamily. Requires Mg(2+) as cofactor.

Its subcellular location is the cell inner membrane. It carries out the reaction UDP-N-acetyl-alpha-D-muramoyl-L-alanyl-gamma-D-glutamyl-meso-2,6-diaminopimeloyl-D-alanyl-D-alanine + di-trans,octa-cis-undecaprenyl phosphate = di-trans,octa-cis-undecaprenyl diphospho-N-acetyl-alpha-D-muramoyl-L-alanyl-D-glutamyl-meso-2,6-diaminopimeloyl-D-alanyl-D-alanine + UMP. It participates in cell wall biogenesis; peptidoglycan biosynthesis. Catalyzes the initial step of the lipid cycle reactions in the biosynthesis of the cell wall peptidoglycan: transfers peptidoglycan precursor phospho-MurNAc-pentapeptide from UDP-MurNAc-pentapeptide onto the lipid carrier undecaprenyl phosphate, yielding undecaprenyl-pyrophosphoryl-MurNAc-pentapeptide, known as lipid I. The protein is Phospho-N-acetylmuramoyl-pentapeptide-transferase of Mesorhizobium japonicum (strain LMG 29417 / CECT 9101 / MAFF 303099) (Mesorhizobium loti (strain MAFF 303099)).